Reading from the N-terminus, the 299-residue chain is DNA-binding transcriptional activator HetR (299 aa).

A DNA-binding domain region spans residues 1–98 (MSNDIDLIKR…GKLLKTLGSQ (98 aa)). DNA-binding positions include 34–40 (RHGAFLD) and 60–76 (NLRM…KRVK). The segment at 99–216 (EPRYLIQFPY…FYALTRPFYA (118 aa)) is flap domain. The active site involves serine 152. A DNA-binding site is contributed by 179-181 (SEA). Positions 217–299 (PADDQERTYI…LQMVFGRKED (83 aa)) are hood domain.

Belongs to the peptidase S48 family. In terms of assembly, upon expression in E.coli most protein is monomeric, although varying amounts of homodimer can be seen. Homodimer; disulfide-linked. Homodimer. Binds the 6 residue C-terminal peptide of PatS; one peptide binds to each subunit. In bacterial two-hybrid assays interacts robustly with itself, Alr2902 and Alr3234 and more weakly with Als1930. Post-translationally, probably autodegrades.

With respect to regulation, protease activity is inhibited by PMSF, suggesting this is a serine protease. Controls heterocyst differentiation. Dimerization is required for DNA-binding. Has both a protease and a DNA-binding activity. Functionally, controls heterocyst differentiation; increased expression leads to more heterocysts than usual. Has protease activity. Binds the promoter regions of hetR, hepA and patS and is required for their expression. Dimerization is required for DNA-binding, DNA-binding is inhibited by the PatS6 peptide. Binds the inverted repeat 5'-GTAGGCGAGGGGTCTAACCCCTCATTACC-3' found in the hetP promoter, required for expression of hetP. The sequence is that of DNA-binding transcriptional activator HetR from Nostoc sp. (strain PCC 7120 / SAG 25.82 / UTEX 2576).